Here is a 1150-residue protein sequence, read N- to C-terminus: ATP-dependent helicase/deoxyribonuclease subunit B (1150 aa).

8–15 (GRAGSGKS) is an ATP binding site. The [4Fe-4S] cluster site is built by Cys-786, Cys-1106, Cys-1109, and Cys-1115.

This sequence belongs to the helicase family. AddB/RexB type 1 subfamily. Heterodimer of AddA and AddB. It depends on Mg(2+) as a cofactor. The cofactor is [4Fe-4S] cluster.

Its function is as follows. The heterodimer acts as both an ATP-dependent DNA helicase and an ATP-dependent, dual-direction single-stranded exonuclease. Recognizes the chi site generating a DNA molecule suitable for the initiation of homologous recombination. The AddB subunit has 5' -&gt; 3' nuclease activity but not helicase activity. The protein is ATP-dependent helicase/deoxyribonuclease subunit B of Clostridium botulinum (strain Hall / ATCC 3502 / NCTC 13319 / Type A).